Consider the following 78-residue polypeptide: Exodeoxyribonuclease 7 small subunit (78 aa).

It belongs to the XseB family. In terms of assembly, heterooligomer composed of large and small subunits.

Its subcellular location is the cytoplasm. The catalysed reaction is Exonucleolytic cleavage in either 5'- to 3'- or 3'- to 5'-direction to yield nucleoside 5'-phosphates.. Bidirectionally degrades single-stranded DNA into large acid-insoluble oligonucleotides, which are then degraded further into small acid-soluble oligonucleotides. In Finegoldia magna (strain ATCC 29328 / DSM 20472 / WAL 2508) (Peptostreptococcus magnus), this protein is Exodeoxyribonuclease 7 small subunit.